The chain runs to 417 residues: NADH-quinone oxidoreductase subunit D (417 aa).

It belongs to the complex I 49 kDa subunit family. NDH-1 is composed of 14 different subunits. Subunits NuoB, C, D, E, F, and G constitute the peripheral sector of the complex.

The protein localises to the cell inner membrane. The catalysed reaction is a quinone + NADH + 5 H(+)(in) = a quinol + NAD(+) + 4 H(+)(out). Its function is as follows. NDH-1 shuttles electrons from NADH, via FMN and iron-sulfur (Fe-S) centers, to quinones in the respiratory chain. The immediate electron acceptor for the enzyme in this species is believed to be ubiquinone. Couples the redox reaction to proton translocation (for every two electrons transferred, four hydrogen ions are translocated across the cytoplasmic membrane), and thus conserves the redox energy in a proton gradient. This chain is NADH-quinone oxidoreductase subunit D, found in Francisella tularensis subsp. novicida (strain U112).